The primary structure comprises 852 residues: Alanine--tRNA ligase (852 aa).

Residues histidine 554, histidine 558, cysteine 656, and histidine 660 each coordinate Zn(2+).

This sequence belongs to the class-II aminoacyl-tRNA synthetase family. Zn(2+) serves as cofactor.

It is found in the cytoplasm. The catalysed reaction is tRNA(Ala) + L-alanine + ATP = L-alanyl-tRNA(Ala) + AMP + diphosphate. Functionally, catalyzes the attachment of alanine to tRNA(Ala) in a two-step reaction: alanine is first activated by ATP to form Ala-AMP and then transferred to the acceptor end of tRNA(Ala). Also edits incorrectly charged Ser-tRNA(Ala) and Gly-tRNA(Ala) via its editing domain. In Campylobacter concisus (strain 13826), this protein is Alanine--tRNA ligase.